The following is a 1377-amino-acid chain: DNA-directed RNA polymerase subunit beta' (1377 aa).

Cys70, Cys72, Cys85, and Cys88 together coordinate Zn(2+). Positions 460, 462, and 464 each coordinate Mg(2+). Residues Cys808, Cys882, Cys889, and Cys892 each coordinate Zn(2+).

This sequence belongs to the RNA polymerase beta' chain family. In terms of assembly, the RNAP catalytic core consists of 2 alpha, 1 beta, 1 beta' and 1 omega subunit. When a sigma factor is associated with the core the holoenzyme is formed, which can initiate transcription. Mg(2+) is required as a cofactor. Requires Zn(2+) as cofactor.

The catalysed reaction is RNA(n) + a ribonucleoside 5'-triphosphate = RNA(n+1) + diphosphate. Its function is as follows. DNA-dependent RNA polymerase catalyzes the transcription of DNA into RNA using the four ribonucleoside triphosphates as substrates. This Geotalea daltonii (strain DSM 22248 / JCM 15807 / FRC-32) (Geobacter daltonii) protein is DNA-directed RNA polymerase subunit beta'.